The chain runs to 399 residues: Argininosuccinate synthase (399 aa).

A8 to S16 is an ATP binding site. The L-citrulline site is built by Y87 and S92. Residue G117 participates in ATP binding. 3 residues coordinate L-aspartate: T119, N123, and D124. N123 provides a ligand contact to L-citrulline. L-citrulline contacts are provided by R127, S176, S185, E261, and Y273.

It belongs to the argininosuccinate synthase family. Type 1 subfamily. Homotetramer.

Its subcellular location is the cytoplasm. It catalyses the reaction L-citrulline + L-aspartate + ATP = 2-(N(omega)-L-arginino)succinate + AMP + diphosphate + H(+). The protein operates within amino-acid biosynthesis; L-arginine biosynthesis; L-arginine from L-ornithine and carbamoyl phosphate: step 2/3. In Clostridioides difficile (strain 630) (Peptoclostridium difficile), this protein is Argininosuccinate synthase.